A 177-amino-acid polypeptide reads, in one-letter code: Large ribosomal subunit protein uL6 (177 aa).

Belongs to the universal ribosomal protein uL6 family. As to quaternary structure, part of the 50S ribosomal subunit.

This protein binds to the 23S rRNA, and is important in its secondary structure. It is located near the subunit interface in the base of the L7/L12 stalk, and near the tRNA binding site of the peptidyltransferase center. This Aliivibrio fischeri (strain MJ11) (Vibrio fischeri) protein is Large ribosomal subunit protein uL6.